We begin with the raw amino-acid sequence, 156 residues long: RNA pyrophosphohydrolase (156 aa).

Positions 6–148 (NYRPNVAAIV…KKNIYVKVIK (143 aa)) constitute a Nudix hydrolase domain. The Nudix box signature appears at 43 to 64 (GGIDKGESAKNALFRELKEEIG).

It belongs to the Nudix hydrolase family. RppH subfamily. It depends on a divalent metal cation as a cofactor.

Its function is as follows. Accelerates the degradation of transcripts by removing pyrophosphate from the 5'-end of triphosphorylated RNA, leading to a more labile monophosphorylated state that can stimulate subsequent ribonuclease cleavage. This Campylobacter jejuni subsp. doylei (strain ATCC BAA-1458 / RM4099 / 269.97) protein is RNA pyrophosphohydrolase.